Consider the following 543-residue polypeptide: Cytochrome P450 52A1 (543 aa).

Residues Met-1–Lys-28 lie on the Lumenal side of the membrane. A helical membrane pass occupies residues Trp-29–Thr-48. The Cytoplasmic segment spans residues Lys-49–Leu-543. Residue Cys-487 participates in heme binding.

Belongs to the cytochrome P450 family. It depends on heme as a cofactor.

The protein resides in the endoplasmic reticulum membrane. Together with an NADPH cytochrome P450 the enzyme system catalyzes the terminal hydroxylation as the first step in the assimilation of alkanes and fatty acids. The chain is Cytochrome P450 52A1 (CYP52A1) from Candida tropicalis (Yeast).